We begin with the raw amino-acid sequence, 156 residues long: SsrA-binding protein (156 aa).

The protein belongs to the SmpB family.

Its subcellular location is the cytoplasm. Required for rescue of stalled ribosomes mediated by trans-translation. Binds to transfer-messenger RNA (tmRNA), required for stable association of tmRNA with ribosomes. tmRNA and SmpB together mimic tRNA shape, replacing the anticodon stem-loop with SmpB. tmRNA is encoded by the ssrA gene; the 2 termini fold to resemble tRNA(Ala) and it encodes a 'tag peptide', a short internal open reading frame. During trans-translation Ala-aminoacylated tmRNA acts like a tRNA, entering the A-site of stalled ribosomes, displacing the stalled mRNA. The ribosome then switches to translate the ORF on the tmRNA; the nascent peptide is terminated with the 'tag peptide' encoded by the tmRNA and targeted for degradation. The ribosome is freed to recommence translation, which seems to be the essential function of trans-translation. The sequence is that of SsrA-binding protein from Clostridium beijerinckii (strain ATCC 51743 / NCIMB 8052) (Clostridium acetobutylicum).